The following is a 226-amino-acid chain: Uridylate kinase (226 aa).

9 to 10 is an ATP binding site; the sequence is GS. Gly-46 contacts UMP. Residues Gly-47 and Arg-51 each coordinate ATP. UMP is bound by residues Asp-68 and 116 to 122; that span reads THPGHTT. 4 residues coordinate ATP: Thr-142, Asn-143, Tyr-148, and Asp-151.

The protein belongs to the UMP kinase family. Homohexamer.

The protein localises to the cytoplasm. It catalyses the reaction UMP + ATP = UDP + ADP. It participates in pyrimidine metabolism; CTP biosynthesis via de novo pathway; UDP from UMP (UMPK route): step 1/1. Inhibited by UTP. Catalyzes the reversible phosphorylation of UMP to UDP. This Methanocaldococcus jannaschii (strain ATCC 43067 / DSM 2661 / JAL-1 / JCM 10045 / NBRC 100440) (Methanococcus jannaschii) protein is Uridylate kinase.